The chain runs to 869 residues: Ubiquitin carboxyl-terminal hydrolase 29 (869 aa).

Polar residues-rich tracts occupy residues Ser-104 to Gln-120 and Ser-140 to Pro-150. Positions Ser-104–Lys-226 are disordered. Positions Val-187–Lys-200 are enriched in basic and acidic residues. Residues Lys-201–Gly-212 show a composition bias toward basic residues. Residues Gly-213 to Lys-226 are compositionally biased toward basic and acidic residues. The region spanning Glu-289–Asn-826 is the USP domain. Catalysis depends on Cys-298, which acts as the Nucleophile. Residues Ser-723–Asp-754 are disordered. His-781 serves as the catalytic Proton acceptor.

Belongs to the peptidase C19 family. Predominantly expressed in brain and testis. Highest expression levels in adult brain, especially in the cerebral cortex and hippocampus, and in the forebrain, face, and limb buds of midgestation mouse embryos.

It is found in the cytoplasm. Its subcellular location is the perinuclear region. The catalysed reaction is Thiol-dependent hydrolysis of ester, thioester, amide, peptide and isopeptide bonds formed by the C-terminal Gly of ubiquitin (a 76-residue protein attached to proteins as an intracellular targeting signal).. Its function is as follows. Deubiquitinase involved in innate antiviral immunity by mediating 'Lys-48'-linked deubiquitination of CGAS, thereby promoting its stabilization. This is Ubiquitin carboxyl-terminal hydrolase 29 from Mus musculus (Mouse).